Consider the following 289-residue polypeptide: Glucose and ribitol dehydrogenase homolog 2 (289 aa).

Positions methionine 1–lysine 32 are disordered. NAD(+) is bound at residue leucine 43–alanine 67. Serine 180 is a substrate binding site. The Proton acceptor role is filled by tyrosine 193.

The protein belongs to the short-chain dehydrogenases/reductases (SDR) family.

Functionally, may act as a short alcohol-polyol-sugar dehydrogenase possibly related to carbohydrate metabolism and the acquisition of desiccation tolerance. May also be involved in signal transduction. The chain is Glucose and ribitol dehydrogenase homolog 2 from Arabidopsis thaliana (Mouse-ear cress).